The sequence spans 351 residues: MFLDERKKRILQSIIDDYISTAEPVGSRTVARKHELGLSSATIRNEMADLEEMGYLTQPHTSAGRIPSDKGYRFYVDQLMKQSELTMEEIYSIKSAMDTKINELSQLLKQVSVAMSKITKYASMAALPEKKNSVLKAVQVVPVEKGKALVVVITNSGTIKNSLINISETVLPEHLVYVSNIFNEKLSGLTIGQINMPVIREIELLMGPSQDILMPVLNGVTDCIEQIDKSEVFLEGAINMLNYPEFSNVERAREFLKLMVEKDLISRVLKDANSEKDKIVIKIGHENDIEEMKECSLITTTYTAGDVVIGTIGIIGPTRMEYSKVLAAINYMKSKMKEHVERLIGKDLSGK.

It belongs to the HrcA family.

Functionally, negative regulator of class I heat shock genes (grpE-dnaK-dnaJ and groELS operons). Prevents heat-shock induction of these operons. The chain is Heat-inducible transcription repressor HrcA from Acetivibrio thermocellus (strain ATCC 27405 / DSM 1237 / JCM 9322 / NBRC 103400 / NCIMB 10682 / NRRL B-4536 / VPI 7372) (Clostridium thermocellum).